The sequence spans 431 residues: 3-phosphoshikimate 1-carboxyvinyltransferase (431 aa).

3-phosphoshikimate-binding residues include Lys-22, Ser-23, and Arg-27. Lys-22 lines the phosphoenolpyruvate pocket. Phosphoenolpyruvate-binding residues include Gly-94 and Arg-122. Residues Ser-168, Ser-169, Gln-170, Ser-196, Asp-315, and Lys-342 each contribute to the 3-phosphoshikimate site. Residue Gln-170 participates in phosphoenolpyruvate binding. Catalysis depends on Asp-315, which acts as the Proton acceptor. 3 residues coordinate phosphoenolpyruvate: Arg-346, Arg-390, and Lys-414.

This sequence belongs to the EPSP synthase family. As to quaternary structure, monomer.

It is found in the cytoplasm. The catalysed reaction is 3-phosphoshikimate + phosphoenolpyruvate = 5-O-(1-carboxyvinyl)-3-phosphoshikimate + phosphate. Its pathway is metabolic intermediate biosynthesis; chorismate biosynthesis; chorismate from D-erythrose 4-phosphate and phosphoenolpyruvate: step 6/7. In terms of biological role, catalyzes the transfer of the enolpyruvyl moiety of phosphoenolpyruvate (PEP) to the 5-hydroxyl of shikimate-3-phosphate (S3P) to produce enolpyruvyl shikimate-3-phosphate and inorganic phosphate. This Nitrosomonas europaea (strain ATCC 19718 / CIP 103999 / KCTC 2705 / NBRC 14298) protein is 3-phosphoshikimate 1-carboxyvinyltransferase.